The sequence spans 361 residues: Phospho-N-acetylmuramoyl-pentapeptide-transferase (361 aa).

10 helical membrane passes run 28 to 48 (LAII…IKFL), 74 to 94 (TMGG…LADL), 99 to 119 (IWIT…DDYA), 133 to 153 (SKLL…EYLD), 168 to 188 (LSLD…VGSS), 203 to 223 (VPIA…GNLI), 236 to 256 (TGEL…FLWF), 263 to 283 (VFMG…ISVI), 288 to 308 (IVLA…ILQV), and 338 to 358 (KVVI…LSSL).

The protein belongs to the glycosyltransferase 4 family. MraY subfamily. Requires Mg(2+) as cofactor.

The protein localises to the cell inner membrane. The catalysed reaction is UDP-N-acetyl-alpha-D-muramoyl-L-alanyl-gamma-D-glutamyl-meso-2,6-diaminopimeloyl-D-alanyl-D-alanine + di-trans,octa-cis-undecaprenyl phosphate = di-trans,octa-cis-undecaprenyl diphospho-N-acetyl-alpha-D-muramoyl-L-alanyl-D-glutamyl-meso-2,6-diaminopimeloyl-D-alanyl-D-alanine + UMP. The protein operates within cell wall biogenesis; peptidoglycan biosynthesis. In terms of biological role, catalyzes the initial step of the lipid cycle reactions in the biosynthesis of the cell wall peptidoglycan: transfers peptidoglycan precursor phospho-MurNAc-pentapeptide from UDP-MurNAc-pentapeptide onto the lipid carrier undecaprenyl phosphate, yielding undecaprenyl-pyrophosphoryl-MurNAc-pentapeptide, known as lipid I. In Rickettsia felis (strain ATCC VR-1525 / URRWXCal2) (Rickettsia azadi), this protein is Phospho-N-acetylmuramoyl-pentapeptide-transferase.